The primary structure comprises 467 residues: Regulatory protein NPR6 (467 aa).

In terms of domain architecture, BTB spans serine 27–proline 111. The segment at arginine 117–threonine 131 adopts a C2HC NPR-type zinc-finger fold. The Zn(2+) site is built by cysteine 120, cysteine 125, histidine 127, and cysteine 130. ANK repeat units follow at residues glutamine 247 to aspartate 276, glutamate 277 to tyrosine 306, threonine 311 to valine 340, and aspartate 344 to leucine 378. Residues arginine 434–phenylalanine 467 form a disordered region. Residues leucine 449–phenylalanine 467 show a composition bias toward basic residues.

The protein belongs to the plant 'ANKYRIN-BTB/POZ' family. 'NOOT-BOP-COCH-like' (NBCL) subfamily. In terms of assembly, homodimer or heterodimer with BOP2. Interacts with PAN.

It is found in the cytoplasm. Its subcellular location is the nucleus. It participates in protein modification; protein ubiquitination. Functionally, may act as a substrate-specific adapter of an E3 ubiquitin-protein ligase complex (CUL3-RBX1-BTB) which mediates the ubiquitination and subsequent proteasomal degradation of target proteins. Acts redundantly with BOP2. BOP1/2 promote leaf and floral meristem fate and determinacy in a pathway targeting AP1 and AGL24. BOP1/2 act as transcriptional co-regulators through direct interaction with TGA factors, including PAN, a direct regulator of AP1. Controls lateral organ fate through positive regulation of adaxial-abaxial polarity genes ATHB-14/PHB, YAB1/FIL and YAB3, and through positive regulation of LOB domain-containing genes LOB, LBD6/AS2 and LBD36. Promotes and maintains a developmentally determinate state in leaf cells through the negative regulation of JAG, JGL and class I KNOX genes. Is also involved in nectary development, formation of normal abscission zones (AZs) and suppression of bract formation, probably by regulating the cell wall disorganization. The polypeptide is Regulatory protein NPR6 (Arabidopsis thaliana (Mouse-ear cress)).